The sequence spans 204 residues: UPF0637 protein lwe1043 (204 aa).

This sequence belongs to the UPF0637 family.

This is UPF0637 protein lwe1043 from Listeria welshimeri serovar 6b (strain ATCC 35897 / DSM 20650 / CCUG 15529 / CIP 8149 / NCTC 11857 / SLCC 5334 / V8).